Reading from the N-terminus, the 122-residue chain is Large ribosomal subunit protein uL14 (122 aa).

This sequence belongs to the universal ribosomal protein uL14 family. As to quaternary structure, part of the 50S ribosomal subunit. Forms a cluster with proteins L3 and L19. In the 70S ribosome, L14 and L19 interact and together make contacts with the 16S rRNA in bridges B5 and B8.

Functionally, binds to 23S rRNA. Forms part of two intersubunit bridges in the 70S ribosome. The sequence is that of Large ribosomal subunit protein uL14 from Chlorobium phaeobacteroides (strain BS1).